The sequence spans 66 residues: MLLCKIKGYTERQKLNQKLMRAAATGDIEAVQKLVLRGADIYCRDHQGDTALSLAAGSGYLDILDI.

One copy of the ANK repeat lies at 14-66 (KLNQKLMRAAATGDIEAVQKLVLRGADIYCRDHQGDTALSLAAGSGYLDILDI).

The polypeptide is Putative ankyrin repeat protein RF_pd14 (Rickettsia felis (strain ATCC VR-1525 / URRWXCal2) (Rickettsia azadi)).